Consider the following 220-residue polypeptide: Adenylate kinase (220 aa).

12 to 17 (GAGKGT) is a binding site for ATP. The segment at 32–62 (STGDIFRDIVKKENDELGKKIKEIMERGELV) is NMP. AMP contacts are provided by residues Thr-33, Arg-38, 60–62 (ELV), 88–91 (GYPR), and Gln-95. An LID region spans residues 129–166 (ARRICPKCGRIYNLISLPPKEDELCDDCKVKLVQREDD). Arg-130 provides a ligand contact to ATP. Zn(2+) contacts are provided by Cys-133 and Cys-136. Position 139 to 140 (139 to 140 (IY)) interacts with ATP. Zn(2+) is bound by residues Cys-153 and Cys-156. AMP contacts are provided by Arg-163 and Arg-174. Ile-202 contributes to the ATP binding site.

Belongs to the adenylate kinase family. In terms of assembly, monomer.

Its subcellular location is the cytoplasm. The catalysed reaction is AMP + ATP = 2 ADP. It participates in purine metabolism; AMP biosynthesis via salvage pathway; AMP from ADP: step 1/1. Its function is as follows. Catalyzes the reversible transfer of the terminal phosphate group between ATP and AMP. Plays an important role in cellular energy homeostasis and in adenine nucleotide metabolism. This is Adenylate kinase from Thermotoga maritima (strain ATCC 43589 / DSM 3109 / JCM 10099 / NBRC 100826 / MSB8).